A 151-amino-acid polypeptide reads, in one-letter code: Deoxyuridine 5'-triphosphate nucleotidohydrolase (151 aa).

Substrate is bound by residues Arg70 to Gly72, Asn83, Leu87 to Asp89, and Met97.

Belongs to the dUTPase family. It depends on Mg(2+) as a cofactor.

The enzyme catalyses dUTP + H2O = dUMP + diphosphate + H(+). It functions in the pathway pyrimidine metabolism; dUMP biosynthesis; dUMP from dCTP (dUTP route): step 2/2. Its function is as follows. This enzyme is involved in nucleotide metabolism: it produces dUMP, the immediate precursor of thymidine nucleotides and it decreases the intracellular concentration of dUTP so that uracil cannot be incorporated into DNA. The protein is Deoxyuridine 5'-triphosphate nucleotidohydrolase of Mannheimia succiniciproducens (strain KCTC 0769BP / MBEL55E).